A 185-amino-acid chain; its full sequence is Adenine phosphoribosyltransferase (185 aa).

This sequence belongs to the purine/pyrimidine phosphoribosyltransferase family. As to quaternary structure, homodimer.

The protein localises to the cytoplasm. It catalyses the reaction AMP + diphosphate = 5-phospho-alpha-D-ribose 1-diphosphate + adenine. The protein operates within purine metabolism; AMP biosynthesis via salvage pathway; AMP from adenine: step 1/1. Its function is as follows. Catalyzes a salvage reaction resulting in the formation of AMP, that is energically less costly than de novo synthesis. This chain is Adenine phosphoribosyltransferase, found in Arthrobacter sp. (strain FB24).